A 145-amino-acid polypeptide reads, in one-letter code: Large ribosomal subunit protein uL16 (145 aa).

Residues 76–95 (PKTKTPAETRMGKGKGEPEH) are compositionally biased toward basic and acidic residues. Residues 76 to 97 (PKTKTPAETRMGKGKGEPEHFV) form a disordered region.

This sequence belongs to the universal ribosomal protein uL16 family. As to quaternary structure, part of the 50S ribosomal subunit.

Functionally, binds 23S rRNA and is also seen to make contacts with the A and possibly P site tRNAs. The chain is Large ribosomal subunit protein uL16 from Salinibacter ruber (strain DSM 13855 / M31).